Here is a 102-residue protein sequence, read N- to C-terminus: Citrate lyase acyl carrier protein (102 aa).

S14 is subject to O-(phosphoribosyl dephospho-coenzyme A)serine.

The protein belongs to the CitD family. Oligomer with a subunit composition of (alpha,beta,gamma)6.

It localises to the cytoplasm. Functionally, covalent carrier of the coenzyme of citrate lyase. This chain is Citrate lyase acyl carrier protein, found in Streptococcus pyogenes serotype M2 (strain MGAS10270).